We begin with the raw amino-acid sequence, 152 residues long: Transcriptional regulator MraZ (152 aa).

SpoVT-AbrB domains follow at residues 5 to 52 (ASSL…PLAQ) and 81 to 124 (ATEY…DEAR).

This sequence belongs to the MraZ family. In terms of assembly, forms oligomers.

The protein resides in the cytoplasm. It localises to the nucleoid. The protein is Transcriptional regulator MraZ of Pseudoalteromonas translucida (strain TAC 125).